A 140-amino-acid chain; its full sequence is Secreted RxLR effector protein 37 (140 aa).

The N-terminal stretch at 1 to 22 (MTYRLPFVAVILFVTAKHVVLA) is a signal peptide. Residues 57 to 76 (RFLRQLEKKPGVNDKRDEER) carry the RxLR-dEER motif.

Belongs to the RxLR effector family.

Its subcellular location is the secreted. The protein resides in the host nucleus. It is found in the host cytoplasm. Its function is as follows. Secreted effector that completely suppresses the host cell death induced by cell death-inducing proteins. The polypeptide is Secreted RxLR effector protein 37 (Plasmopara viticola (Downy mildew of grapevine)).